Here is a 654-residue protein sequence, read N- to C-terminus: Translation factor GUF1, mitochondrial (654 aa).

The region spanning 57-237 is the tr-type G domain; sequence ENYRNFSIVA…SVIKNIPSPV (181 aa). Residues 66 to 73, 130 to 134, and 184 to 187 each bind GTP; these read AHVDHGKS, DTPGH, and NKID.

This sequence belongs to the TRAFAC class translation factor GTPase superfamily. Classic translation factor GTPase family. LepA subfamily.

Its subcellular location is the mitochondrion inner membrane. The enzyme catalyses GTP + H2O = GDP + phosphate + H(+). Functionally, promotes mitochondrial protein synthesis. May act as a fidelity factor of the translation reaction, by catalyzing a one-codon backward translocation of tRNAs on improperly translocated ribosomes. Binds to mitochondrial ribosomes in a GTP-dependent manner. The protein is Translation factor GUF1, mitochondrial of Candida albicans (strain SC5314 / ATCC MYA-2876) (Yeast).